We begin with the raw amino-acid sequence, 139 residues long: Aspartate 1-decarboxylase (139 aa).

The active-site Schiff-base intermediate with substrate; via pyruvic acid is the serine 26. Serine 26 is subject to Pyruvic acid (Ser). Threonine 58 serves as a coordination point for substrate. Tyrosine 59 acts as the Proton donor in catalysis. 72-74 (GGA) provides a ligand contact to substrate.

Belongs to the PanD family. As to quaternary structure, heterooctamer of four alpha and four beta subunits. It depends on pyruvate as a cofactor. In terms of processing, is synthesized initially as an inactive proenzyme, which is activated by self-cleavage at a specific serine bond to produce a beta-subunit with a hydroxyl group at its C-terminus and an alpha-subunit with a pyruvoyl group at its N-terminus.

Its subcellular location is the cytoplasm. It catalyses the reaction L-aspartate + H(+) = beta-alanine + CO2. It participates in cofactor biosynthesis; (R)-pantothenate biosynthesis; beta-alanine from L-aspartate: step 1/1. In terms of biological role, catalyzes the pyruvoyl-dependent decarboxylation of aspartate to produce beta-alanine. In Microcystis aeruginosa (strain NIES-843 / IAM M-2473), this protein is Aspartate 1-decarboxylase.